Here is a 75-residue protein sequence, read N- to C-terminus: UPF0352 protein VF_1649 (75 aa).

It belongs to the UPF0352 family.

This is UPF0352 protein VF_1649 from Aliivibrio fischeri (strain ATCC 700601 / ES114) (Vibrio fischeri).